The following is an 84-amino-acid chain: Cell division topological specificity factor (84 aa).

The protein belongs to the MinE family.

Functionally, prevents the cell division inhibition by proteins MinC and MinD at internal division sites while permitting inhibition at polar sites. This ensures cell division at the proper site by restricting the formation of a division septum at the midpoint of the long axis of the cell. In Paraburkholderia phytofirmans (strain DSM 17436 / LMG 22146 / PsJN) (Burkholderia phytofirmans), this protein is Cell division topological specificity factor.